The primary structure comprises 116 residues: M-zodatoxin-Lt6a/b (116 aa).

The first 22 residues, methionine 1–threonine 22, serve as a signal peptide directing secretion. 2 propeptides span residues valine 23 to arginine 44 and glutamate 80 to arginine 83. 2 short sequence motifs (processing quadruplet motif) span residues glutamate 41–arginine 44 and glutamate 80–arginine 83. Position 84 is a pyrrolidone carboxylic acid (glutamine 84).

Belongs to the cationic peptide 03 (latarcin) family. 06 subfamily. In terms of processing, cleavage of the propeptide depends on the processing quadruplet motif (XXXR, with at least one of X being E). In terms of tissue distribution, expressed by the venom gland.

It localises to the secreted. Does not have antimicrobial activity against neither Gram-positive bacteria (A.globiformis VKM Ac-1112 (MIC&gt;70 uM), and B.subtilis VKM B-501 (MIC&gt;70 uM)), nor Gram-negative bacteria (E.coli DH5-alpha (MIC&gt;70 uM), E.coli MH1 (MIC&gt;70 uM), and P.aeruginosa PAO1 (MIC&gt;70 uM)), nor yeasts (P.pastoris GS115 (MIC&gt;70 uM), and S.cerevisiae Y190 (MIC&gt;70 uM)). Does not have hemolytic activity against rabbit erythrocytes. However, it causes some conductance changes in planar bilayer membranes, without membrane rupture, suggesting a cytolytic function on other biological targets. It causes paralysis, but is not lethal when injected into insect (M.domestica) larvae. The polypeptide is M-zodatoxin-Lt6a/b (Lachesana tarabaevi (Spider)).